Reading from the N-terminus, the 508-residue chain is Mitochondrial distribution and morphology protein 10 (508 aa).

Residues 160–195 (PAHPTSTRPTPPQTPPSHTRQPSEPSTPAPSPTPGN) are disordered.

Belongs to the MDM10 family. In terms of assembly, component of the ER-mitochondria encounter structure (ERMES) or MDM complex, composed of MMM1, MDM10, MDM12 and MDM34. Associates with the mitochondrial outer membrane sorting assembly machinery SAM(core) complex.

The protein localises to the mitochondrion outer membrane. In terms of biological role, component of the ERMES/MDM complex, which serves as a molecular tether to connect the endoplasmic reticulum and mitochondria. Components of this complex are involved in the control of mitochondrial shape and protein biogenesis and may function in phospholipid exchange. MDM10 is involved in the late assembly steps of the general translocase of the mitochondrial outer membrane (TOM complex). Functions in the TOM40-specific route of the assembly of outer membrane beta-barrel proteins, including the association of TOM40 with the receptor TOM22 and small TOM proteins. Can associate with the SAM(core) complex as well as the MDM12-MMM1 complex, both involved in late steps of the major beta-barrel assembly pathway, that is responsible for biogenesis of all outer membrane beta-barrel proteins. May act as a switch that shuttles between both complexes and channels precursor proteins into the TOM40-specific pathway. Plays a role in mitochondrial morphology and in the inheritance of mitochondria. This is Mitochondrial distribution and morphology protein 10 from Cryptococcus neoformans var. neoformans serotype D (strain JEC21 / ATCC MYA-565) (Filobasidiella neoformans).